We begin with the raw amino-acid sequence, 282 residues long: Nucleotide-binding protein XCV3122 (282 aa).

ATP is bound at residue 5–12; that stretch reads GLSGSGKS. Position 57-60 (57-60) interacts with GTP; the sequence is DVRS.

It belongs to the RapZ-like family.

In terms of biological role, displays ATPase and GTPase activities. The chain is Nucleotide-binding protein XCV3122 from Xanthomonas euvesicatoria pv. vesicatoria (strain 85-10) (Xanthomonas campestris pv. vesicatoria).